The sequence spans 109 residues: Large ribosomal subunit protein P1 (109 aa).

Positions 71–109 (APAAASSAPAKKEEPKKEEPKKEEPKEEETDMDMGDLFG) are disordered. Residues 80–95 (AKKEEPKKEEPKKEEP) are compositionally biased toward basic and acidic residues. A run of 3 repeats spans residues 81–85 (KKEEP), 86–90 (KKEEP), and 91–95 (KKEEP). Positions 81 to 95 (KKEEPKKEEPKKEEP) are 3 X 5 AA tandem repeats of K-K-E-E-P. Over residues 96 to 109 (KEEETDMDMGDLFG) the composition is skewed to acidic residues.

It belongs to the eukaryotic ribosomal protein P1/P2 family. In terms of processing, not phosphorylated.

In Tetrahymena thermophila, this protein is Large ribosomal subunit protein P1 (RPLP1).